A 351-amino-acid chain; its full sequence is Selenide, water dikinase (351 aa).

Residue Sec-15 is part of the active site. Sec-15 is a non-standard amino acid (selenocysteine). ATP-binding positions include Lys-18 and 47–49 (DNE). Asp-50 is a binding site for Mg(2+). Residues Asp-67, Asp-90, and 138-140 (GHS) each bind ATP. Residue Asp-90 participates in Mg(2+) binding. Asp-227 contributes to the Mg(2+) binding site.

The protein belongs to the selenophosphate synthase 1 family. Class I subfamily. Homodimer. Requires Mg(2+) as cofactor.

The enzyme catalyses hydrogenselenide + ATP + H2O = selenophosphate + AMP + phosphate + 2 H(+). Functionally, synthesizes selenophosphate from selenide and ATP. The polypeptide is Selenide, water dikinase (Nitratidesulfovibrio vulgaris (strain DP4) (Desulfovibrio vulgaris)).